The primary structure comprises 424 residues: Probable threonylcarbamoyladenosine tRNA methylthiotransferase (424 aa).

The 106-residue stretch at 1–106 (MRVAIETYGC…VVDAVYSALN (106 aa)) folds into the MTTase N-terminal domain. 6 residues coordinate [4Fe-4S] cluster: cysteine 10, cysteine 44, cysteine 73, cysteine 143, cysteine 147, and cysteine 150. The region spanning 129–359 (LRENAIAIVS…TDLMRKIGLE (231 aa)) is the Radical SAM core domain. The TRAM domain occupies 362 to 420 (KRFVGKKLRVLVTKEGKNGRNLARMNSYRAVVTEGAVGEFVEVKIKDCRFNYLIGQLAA).

Belongs to the methylthiotransferase family. CDKAL1 subfamily. The cofactor is [4Fe-4S] cluster.

It carries out the reaction N(6)-L-threonylcarbamoyladenosine(37) in tRNA + (sulfur carrier)-SH + AH2 + 2 S-adenosyl-L-methionine = 2-methylsulfanyl-N(6)-L-threonylcarbamoyladenosine(37) in tRNA + (sulfur carrier)-H + 5'-deoxyadenosine + L-methionine + A + S-adenosyl-L-homocysteine + 2 H(+). Functionally, catalyzes the methylthiolation of N6-threonylcarbamoyladenosine (t(6)A), leading to the formation of 2-methylthio-N6-threonylcarbamoyladenosine (ms(2)t(6)A) at position 37 in tRNAs that read codons beginning with adenine. The chain is Probable threonylcarbamoyladenosine tRNA methylthiotransferase from Archaeoglobus fulgidus (strain ATCC 49558 / DSM 4304 / JCM 9628 / NBRC 100126 / VC-16).